Reading from the N-terminus, the 50-residue chain is Small nuclear ribonucleoprotein Sm D2 (50 aa).

The tract at residues 1 to 36 is disordered; sequence MSLLNKPKSEMTPEELQKREEEEFNTGPLSVXTQSX. N-acetylserine is present on S2. Glycyl lysine isopeptide (Lys-Gly) (interchain with G-Cter in SUMO2) cross-links involve residues K6 and K8. Over residues 7–21 the composition is skewed to basic and acidic residues; the sequence is PKSEMTPEELQKREE. S9 bears the Phosphoserine mark. T12 is modified (phosphothreonine).

The protein belongs to the snRNP core protein family. Core component of the spliceosomal U1, U2, U4 and U5 small nuclear ribonucleoproteins (snRNPs), the building blocks of the spliceosome. Most spliceosomal snRNPs contain a common set of Sm proteins, SNRPB, SNRPD1, SNRPD2, SNRPD3, SNRPE, SNRPF and SNRPG that assemble in a heptameric protein ring on the Sm site of the small nuclear RNA to form the core snRNP. Component of the U1 snRNP. The U1 snRNP is composed of the U1 snRNA and the 7 core Sm proteins SNRPB, SNRPD1, SNRPD2, SNRPD3, SNRPE, SNRPF and SNRPG, and at least three U1 snRNP-specific proteins SNRNP70/U1-70K, SNRPA/U1-A and SNRPC/U1-C. Component of the U4/U6-U5 tri-snRNP complex composed of the U4, U6 and U5 snRNAs and at least PRPF3, PRPF4, PRPF6, PRPF8, PRPF31, SNRNP200, TXNL4A, SNRNP40, SNRPB, SNRPD1, SNRPD2, SNRPD3, SNRPE, SNRPF, SNRPG, DDX23, CD2BP2, PPIH, SNU13, EFTUD2, SART1 and USP39, plus LSM2, LSM3, LSM4, LSM5, LSM6, LSM7 and LSM8. Component of the minor spliceosome, which splices U12-type introns. Part of the SMN-Sm complex that contains SMN1, GEMIN2/SIP1, DDX20/GEMIN3, GEMIN4, GEMIN5, GEMIN6, GEMIN7, GEMIN8, STRAP/UNRIP and the Sm proteins SNRPB, SNRPD1, SNRPD2, SNRPD3, SNRPE, SNRPF and SNRPG; catalyzes core snRNPs assembly. Forms a 6S pICln-Sm complex composed of CLNS1A/pICln, SNRPD1, SNRPD2, SNRPE, SNRPF and SNRPG; ring-like structure where CLNS1A/pICln mimics additional Sm proteins and which is unable to assemble into the core snRNP. Interacts with SMN1; the interaction is direct. Interacts with GEMIN2; the interaction is direct. Interacts with SNRPD1; the interaction is direct. Interacts with SNRPF; the interaction is direct.

The protein localises to the cytoplasm. It is found in the cytosol. The protein resides in the nucleus. Functionally, plays a role in pre-mRNA splicing as a core component of the spliceosomal U1, U2, U4 and U5 small nuclear ribonucleoproteins (snRNPs), the building blocks of the spliceosome. Component of both the pre-catalytic spliceosome B complex and activated spliceosome C complexes. As a component of the minor spliceosome, involved in the splicing of U12-type introns in pre-mRNAs. The protein is Small nuclear ribonucleoprotein Sm D2 (SNRPD2) of Sus scrofa (Pig).